The following is a 304-amino-acid chain: Thyroxine 5-deiodinase (304 aa).

The segment at 1–22 is disordered; it reads MPRQAASRLVVGEGEGPPGASG. The Cytoplasmic portion of the chain corresponds to 1–42; the sequence is MPRQAASRLVVGEGEGPPGASGPAATMLRSLLLHSLRLCAQT. The helical; Signal-anchor for type II membrane protein transmembrane segment at 43–62 threads the bilayer; it reads ASCLVLFPRFLGTAFMLWLL. Residues 63–304 are Extracellular-facing; the sequence is DFLCIRKHFL…QLHGTRPRRL (242 aa). The active site involves Sec170. Sec170 is a non-standard amino acid (selenocysteine).

The protein belongs to the iodothyronine deiodinase family. As to quaternary structure, monomer. Homodimer. May undergo minor heretodimerization with DIO1 and DIO2. As to expression, neonatal skin, placenta, skeletal muscle and cerebral cortex.

It is found in the cell membrane. The protein resides in the endosome membrane. The catalysed reaction is 3,3',5'-triiodo-L-thyronine + iodide + A + H(+) = L-thyroxine + AH2. It catalyses the reaction 3,3'-diiodo-L-thyronine + iodide + A + H(+) = 3,3',5-triiodo-L-thyronine + AH2. The enzyme catalyses 3-iodo-L-thyronine + iodide + A + H(+) = 3,5-diiodo-L-thyronine + AH2. It carries out the reaction L-thyronine + iodide + A + H(+) = 3-iodo-L-thyronine + AH2. The catalysed reaction is 3',5'-diiodo-L-thyronine + iodide + A + H(+) = 3,3',5'-triiodo-L-thyronine + AH2. It catalyses the reaction 3'-iodo-L-thyronine + iodide + A + H(+) = 3,3'-diiodo-L-thyronine + AH2. The enzyme catalyses 3,3',5'-triiodothyronamine + iodide + A + H(+) = 3,3',5,5'-tetraiodothyronamine + AH2. It carries out the reaction 3',5'-diiodothyronamine + iodide + A + H(+) = 3,3',5'-triiodothyronamine + AH2. The catalysed reaction is 3,3'-diiodothyronamine + iodide + A + H(+) = 3,3',5-triiodothyronamine + AH2. It catalyses the reaction 3-iodothyronamine + iodide + A + H(+) = 3,5-diiodothyronamine + AH2. The enzyme catalyses 3'-iodothyronamine + iodide + A + H(+) = 3,3'-diiodothyronamine + AH2. It carries out the reaction thyronamine + iodide + A + H(+) = 3-iodothyronamine + AH2. Its function is as follows. Plays a crucial role in the metabolism of thyroid hormones (TH) and has specific roles in TH activation and inactivation by deiodination. Catalyzes the deiodination of L-thyroxine (T4) to 3,3',5'-triiodothyronine (rT3), 3,5-diiodothyronine (3,5-T2) to 3-monoiodothyronine (3-T1), rT3 to 3',5'-diiodothyronine (3',5'-T2) and 3,3'-diiodothyronine (3,3'-T2) to 3'-monoiodothyronine (3'-T1) via inner-ring deiodination (IRD). Catalyzes the deiodination of 3,5,3'-triiodothyronine (T3) to 3,3'-diiodothyronine (3,3'-T2) via IRD. Catalyzes the deiodination of 3-T1 to L-thyronine (T0) via outer-ring deiodination (ORD). Catalyzes the tyrosyl ring deiodinations of T4AM (3,3',5,5'-tetraiodothyronamine), rT3AM (3,3',5'-triiodothyronamine), T3AM (3,5,3'-triiodothyronamine), 3,5-T2AM (3,5-diiodothyronamine), 3,3'-T2AM (3,3'-diiodothyronamine) and 3-T1AM (3-iodothyronamine). This chain is Thyroxine 5-deiodinase (Dio3), found in Rattus norvegicus (Rat).